The primary structure comprises 143 residues: MFLGTYTPRLDEKSRLILPAKFREELAEGLVLTRGQERCIYVFSAREFERVHEQMRSAPLSSRQARDYIRVFLSGASDEVPDKQGRVTVPAPLRQYAGLDRDVTVIGAGTRVEIWDSESWNTYLAEQEAAFSETDEDVLPGVF.

SpoVT-AbrB domains are found at residues 5-47 (TYTP…SARE) and 76-119 (ASDE…DSES).

Belongs to the MraZ family. As to quaternary structure, forms oligomers.

The protein localises to the cytoplasm. Its subcellular location is the nucleoid. This is Transcriptional regulator MraZ from Micrococcus luteus (strain ATCC 4698 / DSM 20030 / JCM 1464 / CCM 169 / CCUG 5858 / IAM 1056 / NBRC 3333 / NCIMB 9278 / NCTC 2665 / VKM Ac-2230) (Micrococcus lysodeikticus).